The sequence spans 482 residues: Glutamate--tRNA ligase (482 aa).

The 'HIGH' region signature appears at proline 9–glycine 19. Positions lysine 250 to arginine 254 match the 'KMSKS' region motif. Lysine 253 contributes to the ATP binding site.

The protein belongs to the class-I aminoacyl-tRNA synthetase family. Glutamate--tRNA ligase type 1 subfamily. In terms of assembly, monomer.

The protein localises to the cytoplasm. The catalysed reaction is tRNA(Glu) + L-glutamate + ATP = L-glutamyl-tRNA(Glu) + AMP + diphosphate. Its function is as follows. Catalyzes the attachment of glutamate to tRNA(Glu) in a two-step reaction: glutamate is first activated by ATP to form Glu-AMP and then transferred to the acceptor end of tRNA(Glu). This chain is Glutamate--tRNA ligase, found in Desulforamulus reducens (strain ATCC BAA-1160 / DSM 100696 / MI-1) (Desulfotomaculum reducens).